The primary structure comprises 354 residues: Peptide chain release factor 1 (354 aa).

Q231 is modified (N5-methylglutamine). Basic and acidic residues predominate over residues 284–304 (EALAKDRKEQVGSGDRSERIR). The disordered stretch occupies residues 284–308 (EALAKDRKEQVGSGDRSERIRTYNF).

Belongs to the prokaryotic/mitochondrial release factor family. In terms of processing, methylated by PrmC. Methylation increases the termination efficiency of RF1.

The protein resides in the cytoplasm. In terms of biological role, peptide chain release factor 1 directs the termination of translation in response to the peptide chain termination codons UAG and UAA. The sequence is that of Peptide chain release factor 1 from Nitratiruptor sp. (strain SB155-2).